The sequence spans 492 residues: Endoglucanase 15 (492 aa).

An N-terminal signal peptide occupies residues 1–30 (MSCISSQCFITIKSICIVLLLSITCGAVSA). D86 functions as the Nucleophile in the catalytic mechanism. Catalysis depends on residues H414, D466, and E475.

Belongs to the glycosyl hydrolase 9 (cellulase E) family.

It is found in the secreted. It catalyses the reaction Endohydrolysis of (1-&gt;4)-beta-D-glucosidic linkages in cellulose, lichenin and cereal beta-D-glucans.. The sequence is that of Endoglucanase 15 from Arabidopsis thaliana (Mouse-ear cress).